The sequence spans 436 residues: T-box transcription factor T (436 aa).

The segment at residues 51-219 (LWLRFKELTN…YNPFAKAFLD (169 aa)) is a DNA-binding region (T-box).

In terms of assembly, monomer. Binds DNA as a monomer.

Its subcellular location is the nucleus. In terms of biological role, involved in the transcriptional regulation of genes required for mesoderm formation and differentiation. Binds to a palindromic T site 5'-TTCACACCTAGGTGTGAA-3' DNA sequence and activates gene transcription when bound to such a site. The chain is T-box transcription factor T from Mus musculus (Mouse).